A 354-amino-acid polypeptide reads, in one-letter code: Photosystem II protein D1 (354 aa).

At T2 the chain carries N-acetylthreonine. A Phosphothreonine modification is found at T2. The next 3 helical transmembrane spans lie at 29 to 46 (YIGW…TATS), 118 to 133 (HFLL…EWEL), and 142 to 156 (WIAV…AATA). H118 is a binding site for chlorophyll a. A pheophytin a-binding site is contributed by Y126. [CaMn4O5] cluster contacts are provided by D170 and E189. Residues 197-218 (FHMLGVAGVFGGSLFSAMHGSL) form a helical membrane-spanning segment. H198 serves as a coordination point for chlorophyll a. A quinone contacts are provided by residues H215 and 264–265 (SF). H215 contacts Fe cation. A Fe cation-binding site is contributed by H272. The helical transmembrane segment at 274–288 (FLAAWPVVGIWFTAL) threads the bilayer. [CaMn4O5] cluster-binding residues include H332, E333, D342, and A344. The propeptide occupies 345-354 (ASIEAPSLNG).

The protein belongs to the reaction center PufL/M/PsbA/D family. As to quaternary structure, PSII is composed of 1 copy each of membrane proteins PsbA, PsbB, PsbC, PsbD, PsbE, PsbF, PsbH, PsbI, PsbJ, PsbK, PsbL, PsbM, PsbT, PsbX, PsbY, PsbZ, Psb30/Ycf12, at least 3 peripheral proteins of the oxygen-evolving complex and a large number of cofactors. It forms dimeric complexes. The D1/D2 heterodimer binds P680, chlorophylls that are the primary electron donor of PSII, and subsequent electron acceptors. It shares a non-heme iron and each subunit binds pheophytin, quinone, additional chlorophylls, carotenoids and lipids. D1 provides most of the ligands for the Mn4-Ca-O5 cluster of the oxygen-evolving complex (OEC). There is also a Cl(-1) ion associated with D1 and D2, which is required for oxygen evolution. The PSII complex binds additional chlorophylls, carotenoids and specific lipids. serves as cofactor. Post-translationally, tyr-161 forms a radical intermediate that is referred to as redox-active TyrZ, YZ or Y-Z. In terms of processing, C-terminally processed by CTPA; processing is essential to allow assembly of the oxygen-evolving complex and thus photosynthetic growth.

The protein resides in the plastid. Its subcellular location is the chloroplast thylakoid membrane. The catalysed reaction is 2 a plastoquinone + 4 hnu + 2 H2O = 2 a plastoquinol + O2. Functionally, photosystem II (PSII) is a light-driven water:plastoquinone oxidoreductase that uses light energy to abstract electrons from H(2)O, generating O(2) and a proton gradient subsequently used for ATP formation. It consists of a core antenna complex that captures photons, and an electron transfer chain that converts photonic excitation into a charge separation. The D1/D2 (PsbA/PsbD) reaction center heterodimer binds P680, the primary electron donor of PSII as well as several subsequent electron acceptors. This chain is Photosystem II protein D1, found in Selaginella uncinata (Blue spike-moss).